The primary structure comprises 147 residues: Lysozyme C (147 aa).

The N-terminal stretch at 1–18 (MKVLLLLGFIFCSMAAHG) is a signal peptide. In terms of domain architecture, C-type lysozyme spans 19–147 (KRMERCEFAR…LSKYLEGCHL (129 aa)). 4 disulfide bridges follow: Cys-24–Cys-145, Cys-48–Cys-133, Cys-83–Cys-99, and Cys-95–Cys-113. Residues Glu-53 and Asp-71 contribute to the active site.

It belongs to the glycosyl hydrolase 22 family. Monomer.

The protein resides in the secreted. It carries out the reaction Hydrolysis of (1-&gt;4)-beta-linkages between N-acetylmuramic acid and N-acetyl-D-glucosamine residues in a peptidoglycan and between N-acetyl-D-glucosamine residues in chitodextrins.. In terms of biological role, lysozymes have primarily a bacteriolytic function; those in tissues and body fluids are associated with the monocyte-macrophage system and enhance the activity of immunoagents. The polypeptide is Lysozyme C (LYZ) (Trichosurus vulpecula (Brush-tailed possum)).